The primary structure comprises 343 residues: CRISPR-associated endonuclease Cas1 1 (343 aa).

The Mn(2+) site is built by Glu166, His234, and Glu249.

Belongs to the CRISPR-associated endonuclease Cas1 family. In terms of assembly, homodimer, forms a heterotetramer with a Cas2 homodimer. Requires Mg(2+) as cofactor. Mn(2+) serves as cofactor.

CRISPR (clustered regularly interspaced short palindromic repeat), is an adaptive immune system that provides protection against mobile genetic elements (viruses, transposable elements and conjugative plasmids). CRISPR clusters contain spacers, sequences complementary to antecedent mobile elements, and target invading nucleic acids. CRISPR clusters are transcribed and processed into CRISPR RNA (crRNA). Acts as a dsDNA endonuclease. Involved in the integration of spacer DNA into the CRISPR cassette. This is CRISPR-associated endonuclease Cas1 1 from Moorella thermoacetica (strain ATCC 39073 / JCM 9320).